Reading from the N-terminus, the 550-residue chain is Arginine--tRNA ligase (550 aa).

The short motif at 130 to 140 (ANPTGPIHIGG) is the 'HIGH' region element.

The protein belongs to the class-I aminoacyl-tRNA synthetase family. In terms of assembly, monomer.

The protein resides in the cytoplasm. The enzyme catalyses tRNA(Arg) + L-arginine + ATP = L-arginyl-tRNA(Arg) + AMP + diphosphate. This Mycobacterium marinum (strain ATCC BAA-535 / M) protein is Arginine--tRNA ligase.